A 307-amino-acid polypeptide reads, in one-letter code: uncharacterized protein (307 aa).

The 254-residue stretch at 54–307 folds into the EAL domain; it reads RHYLSTSMRV…KALPVDFFRE (254 aa). 2 helical membrane-spanning segments follow: residues 158 to 178 and 203 to 223; these read PGFLVLVEGVLGETGLPAHAL and ALGVGIAIDDFGIGFSSLAYL.

It is found in the cell membrane. This is an uncharacterized protein from Mycobacterium tuberculosis (strain CDC 1551 / Oshkosh).